Reading from the N-terminus, the 203-residue chain is Interferon type B (203 aa).

The first 27 residues, 1–27, serve as a signal peptide directing secretion; it reads MTANHQSPGMHSILLLLLLPALTTTFS. Disulfide bonds link cysteine 28-cysteine 125 and cysteine 57-cysteine 164. Residues asparagine 37 and asparagine 160 are each glycosylated (N-linked (GlcNAc...) asparagine).

The protein belongs to the alpha/beta interferon family.

The protein resides in the secreted. Has antiviral activities. The sequence is that of Interferon type B (IFNB) from Gallus gallus (Chicken).